Consider the following 743-residue polypeptide: Beta-galactosidase (743 aa).

Catalysis depends on Glu388, which acts as the Proton donor. The active-site Nucleophile is the Glu453.

It belongs to the glycosyl hydrolase 2 family. As to quaternary structure, homodimer.

The catalysed reaction is Hydrolysis of terminal non-reducing beta-D-galactose residues in beta-D-galactosides.. In terms of biological role, beta-galactosidase. This Thermoanaerobacter pseudethanolicus (strain ATCC 33223 / 39E) (Clostridium thermohydrosulfuricum) protein is Beta-galactosidase (lacZ).